A 178-amino-acid chain; its full sequence is Large ribosomal subunit protein bL19 (178 aa).

Belongs to the bacterial ribosomal protein bL19 family.

This protein is located at the 30S-50S ribosomal subunit interface and may play a role in the structure and function of the aminoacyl-tRNA binding site. This is Large ribosomal subunit protein bL19 from Rhizobium etli (strain ATCC 51251 / DSM 11541 / JCM 21823 / NBRC 15573 / CFN 42).